The sequence spans 729 residues: MSDLKCPFSGHTGAVTASAHTGNRQWWPIQIDLGLLHQHHPASNPLGDTFDYPAAFAGLDLEALKADLAALMTDSQDWWPADWGHYGGLFIRMAWHSAGTYRGADGRGGAGHGNQRFAPLNSWPDNTNLDKARRLLWPLKRKYGNAISWADLIILSGNVALESMGFRTFGFAGGRTDIWQPEEDVFWGKETEWLSDERHTTEGALDQPLAAVEMGLVYVNPEGPHGHPDPVASGPDVRDTFARMGMTMEETVALVAGGHTFGKCHGAAPVSQLEAEPEGAELHQQGLGWHNRFESGKGEHTITSGIEGAWKPHPTRWDQGYFEMMFTYEWELTKSPAGAWQWVAKDVKPEHMIPDAHVPGRASAPIMTTADLSLRHDPLMEPVARRFHQDQDAFADAFARAWFKLTHRDLGPRALYLGADVPEEIQIWQDPVPALDHPLIGAVEIKALKQKLLATGCSVGALVATAWGAASTFRGSDRRGGANGGRIRFQPQNTWEVNDPEQLRSVLQTLETVQQQFNAEATGGQRVSMADLIVLAGSAAVEQAAAAGGHSVTVPFLPGRMDASADQTDTASFNLLKPIADGFRNWQRSGLPLRAEECLVDRAQQLGLSAPEMTVLLAGLRVLGANNGGNRQGVLTDRVGVLSNDFCVNLLDMSIRWSPTSEAMEGYIGRDAQGSERWTASRADLVFGSNSQLRAIVEVYAQDDGASRFVSDFVQAWVKVMNLDRFDVR.

The tryptophyl-tyrosyl-methioninium (Trp-Tyr) (with M-244) cross-link spans 95–218; sequence WHSAGTYRGA…LAAVEMGLVY (124 aa). The Proton acceptor role is filled by H96. Positions 218-244 form a cross-link, tryptophyl-tyrosyl-methioninium (Tyr-Met) (with W-95); it reads YVNPEGPHGHPDPVASGPDVRDTFARM. Residue H259 coordinates heme b.

Belongs to the peroxidase family. Peroxidase/catalase subfamily. Homodimer or homotetramer. Requires heme b as cofactor. Formation of the three residue Trp-Tyr-Met cross-link is important for the catalase, but not the peroxidase activity of the enzyme.

The catalysed reaction is H2O2 + AH2 = A + 2 H2O. It catalyses the reaction 2 H2O2 = O2 + 2 H2O. Functionally, bifunctional enzyme with both catalase and broad-spectrum peroxidase activity. This Synechococcus sp. (strain CC9605) protein is Catalase-peroxidase.